We begin with the raw amino-acid sequence, 141 residues long: Pheromone-binding protein-related protein 6 (141 aa).

An N-terminal signal peptide occupies residues 1–16 (MVKYPLILLLIGCAAA). Cystine bridges form between Cys41–Cys72, Cys68–Cys120, and Cys111–Cys129.

This sequence belongs to the PBP/GOBP family. Antenna. Mostly expressed in two types of sensory hairs, sensilla trichodea and small sensilla basiconica, in the ventro-lateral region of the third antennal segment (at protein level).

It is found in the secreted. The chain is Pheromone-binding protein-related protein 6 (Obp83b) from Drosophila melanogaster (Fruit fly).